The sequence spans 535 residues: Ankyrin repeat domain-containing protein 34C (535 aa).

ANK repeat units follow at residues 10–39, 43–80, 84–114, and 118–147; these read TDGNSLLKAVWLGRLRLTRLLLEGGAYINE, KGETALMVACITKHVDQQSISKSKMVKYLLDNRADPNI, SGKTALIHACIRRAGGEVVSLLLENGADPSL, and TGASALVYAINADDKDALKHLLDACKAKGK. 2 disordered regions span residues 159–181 and 214–237; these read SGTKTTKQYLNVPPSPKVEDRHS and AGHPSSCNTSKAVNEPGSPTRKVS. The span at 216–225 shows a compositional bias: polar residues; that stretch reads HPSSCNTSKA. Serine 301 is subject to Phosphoserine. A disordered region spans residues 381 to 444; it reads DLDIQPGPDP…RRRPPHLLER (64 aa). Serine 447 carries the phosphoserine modification.

It belongs to the ANKRD34 family.

The protein is Ankyrin repeat domain-containing protein 34C (ANKRD34C) of Homo sapiens (Human).